The chain runs to 905 residues: Core protein VP3 (905 aa).

The protein belongs to the orbivirus VP3 family.

The protein localises to the virion. Its function is as follows. The VP3 protein is one of the five proteins (with VP1, VP4, VP6 and VP7) which form the inner capsid of the virus. This chain is Core protein VP3 (Segment-3), found in African horse sickness virus (AHSV).